The primary structure comprises 149 residues: Large ribosomal subunit protein uL13 (149 aa).

Belongs to the universal ribosomal protein uL13 family. In terms of assembly, part of the 50S ribosomal subunit.

This protein is one of the early assembly proteins of the 50S ribosomal subunit, although it is not seen to bind rRNA by itself. It is important during the early stages of 50S assembly. This chain is Large ribosomal subunit protein uL13, found in Chlamydia pneumoniae (Chlamydophila pneumoniae).